Here is a 313-residue protein sequence, read N- to C-terminus: uncharacterized protein (313 aa).

A run of 3 helical transmembrane segments spans residues 41 to 61 (LAGT…GLMV), 68 to 88 (VHSV…FHYF), and 102 to 122 (QLLL…KLVL).

This sequence belongs to the cytochrome b family.

It is found in the mitochondrion membrane. This is an uncharacterized protein from Arabidopsis thaliana (Mouse-ear cress).